We begin with the raw amino-acid sequence, 304 residues long: Light-independent protochlorophyllide reductase iron-sulfur ATP-binding protein (304 aa).

ATP contacts are provided by residues Gly-46–Thr-51 and Lys-75. Ser-50 provides a ligand contact to Mg(2+). [4Fe-4S] cluster-binding residues include Cys-131 and Cys-165. Residues Asn-216 to Arg-217 and Pro-240 to Leu-242 contribute to the ATP site.

Belongs to the NifH/BchL/ChlL family. As to quaternary structure, homodimer. Protochlorophyllide reductase is composed of three subunits; BchL, BchN and BchB. The cofactor is [4Fe-4S] cluster.

The enzyme catalyses chlorophyllide a + oxidized 2[4Fe-4S]-[ferredoxin] + 2 ADP + 2 phosphate = protochlorophyllide a + reduced 2[4Fe-4S]-[ferredoxin] + 2 ATP + 2 H2O. The protein operates within porphyrin-containing compound metabolism; bacteriochlorophyll biosynthesis (light-independent). Functionally, component of the dark-operative protochlorophyllide reductase (DPOR) that uses Mg-ATP and reduced ferredoxin to reduce ring D of protochlorophyllide (Pchlide) to form chlorophyllide a (Chlide). This reaction is light-independent. The L component serves as a unique electron donor to the NB-component of the complex, and binds Mg-ATP. The chain is Light-independent protochlorophyllide reductase iron-sulfur ATP-binding protein from Rhodobacter capsulatus (strain ATCC BAA-309 / NBRC 16581 / SB1003).